Here is a 277-residue protein sequence, read N- to C-terminus: Methyltransferase str3 (277 aa).

It belongs to the methyltransferase superfamily. LaeA methyltransferase family.

It participates in mycotoxin biosynthesis. In terms of biological role, methyltransferase; part of the gene cluster that mediates the biosynthesis of strobilurin A, an antifungal polyketide that contains a key beta-methoxyacrylate toxophore that targets the complex III of the mitochondrial electron transport chain. Strobilurin biosynthesis begins with construction of benzoyl CoA by step-wise elimination of ammonia from phenylalanine by the phenylalanine ammonia-lyase str11, oxygenation by str8 and retro-Claisen reaction to form benzoic acid, which is activated to its CoA thiolester benzoyl CoA by the dedicated CoA ligase str10. Benzoyl CoA forms the starter unit for the highly reducing polyketide synthase stpks1 that produces the polyketide prestrobilutin A. The FAD-dependent oxygenase str9 then catalyzes the key oxidative rearrangement responsible for the creation of the beta-methoxyacrylate toxophore. Str9 performs epoxidation of the 2,3 olefin of prestrobilutin A, followed by Meinwald rearrangement to furnish the aldehyde intermediate. Rapid enolization of the aldehyde intermediate would give the beta-methoxyacrylate skeleton and methylations catalyzed by str2 and str3 complete the synthesis and lead to the production of strobilurin A. The short-chain dehydrogenase stl2 and the dehydrogenase str4 play a role in the shunt pathway leading to the production of bolineol. The cluster encodes no obvious halogenase gene that could be involved in production of strobilurin B, nor any obvious dimethylallyl-transferase that could be involved in the production of strobilurin G. It is possible that unknown proteins encoded in, or near, the cluster (such as str1 or stl1) may form new classes of halogenases or dimethylally-transferases, or that the responsible genes are located elsewhere on the genome. Similarly, proteins encoded by str5/str6 hydrolases appear to have no chemical role in the biosynthesis of strobilurin A. Finally, no obvious self-resistance gene is found within the cluster. The sequence is that of Methyltransferase str3 from Strobilurus tenacellus.